The following is a 120-amino-acid chain: Large ribosomal subunit protein uL18 (120 aa).

The protein belongs to the universal ribosomal protein uL18 family. In terms of assembly, part of the 50S ribosomal subunit; part of the 5S rRNA/L5/L18/L25 subcomplex. Contacts the 5S and 23S rRNAs.

Functionally, this is one of the proteins that bind and probably mediate the attachment of the 5S RNA into the large ribosomal subunit, where it forms part of the central protuberance. The sequence is that of Large ribosomal subunit protein uL18 from Chloroherpeton thalassium (strain ATCC 35110 / GB-78).